A 66-amino-acid chain; its full sequence is Large ribosomal subunit protein bL33c (66 aa).

It belongs to the bacterial ribosomal protein bL33 family.

It localises to the plastid. The protein resides in the chloroplast. This is Large ribosomal subunit protein bL33c from Lotus japonicus (Lotus corniculatus var. japonicus).